The chain runs to 655 residues: Phosphatidylinositol-3,5-bisphosphate 3-phosphatase MTMR6 (655 aa).

A GRAM domain is found at 1 to 101; that stretch reads MEHIRTTKVE…YNSLLQLSKQ (101 aa). The interaction with RAB1B stretch occupies residues 2 to 141; that stretch reads EHIRTTKVEQ…AEYERMGVPN (140 aa). Position 108 is a phosphotyrosine (tyrosine 108). The Myotubularin phosphatase domain maps to 124–537; the sequence is GWQLIDLAAE…FNFKFWRNMY (414 aa). Residues asparagine 286, asparagine 311, and isoleucine 312 each coordinate a 1,2-diacyl-sn-glycero-3-phospho-(1D-myo-inositol-3,5-bisphosphate). Residues asparagine 286, asparagine 311, and isoleucine 312 each coordinate a 1,2-diacyl-sn-glycero-3-phospho-(1D-myo-inositol-3-phosphate). Catalysis depends on cysteine 374, which acts as the Phosphocysteine intermediate. Residues serine 375, aspartate 376, glycine 377, tryptophan 378, aspartate 379, arginine 380, lysine 416, and arginine 420 each contribute to the a 1,2-diacyl-sn-glycero-3-phospho-(1D-myo-inositol-3,5-bisphosphate) site. Residues serine 375, aspartate 376, glycine 377, tryptophan 378, aspartate 379, and arginine 380 each contribute to the a 1,2-diacyl-sn-glycero-3-phospho-(1D-myo-inositol-3-phosphate) site. Residue arginine 420 participates in a 1,2-diacyl-sn-glycero-3-phospho-(1D-myo-inositol-3-phosphate) binding. Residues 547–581 adopt a coiled-coil conformation; it reads RQSVLNIIMNMNEQNKQLEEDVKDLEAKIKQCKSG. 3 positions are modified to phosphoserine: serine 595, serine 623, and serine 645.

The protein belongs to the protein-tyrosine phosphatase family. Non-receptor class myotubularin subfamily. In terms of assembly, homodimer. Heterodimer (via C-terminus) with MTMR9 (via C-terminus). Interacts with ALKBH4. Interacts with KCNN4. Interacts (via GRAM domain) with RAB1B (in GDP-bound form); the interaction regulates MTMR6 recruitment to the endoplasmic reticulum-Golgi intermediate compartment.

The protein resides in the cytoplasm. It localises to the endoplasmic reticulum. It is found in the cell projection. The protein localises to the ruffle membrane. Its subcellular location is the endoplasmic reticulum-Golgi intermediate compartment. The protein resides in the perinuclear region. It catalyses the reaction a 1,2-diacyl-sn-glycero-3-phospho-(1D-myo-inositol-3,5-bisphosphate) + H2O = a 1,2-diacyl-sn-glycero-3-phospho-(1D-myo-inositol-5-phosphate) + phosphate. The enzyme catalyses a 1,2-diacyl-sn-glycero-3-phospho-(1D-myo-inositol-3-phosphate) + H2O = a 1,2-diacyl-sn-glycero-3-phospho-(1D-myo-inositol) + phosphate. It carries out the reaction 1,2-dioctanoyl-sn-glycero-3-phospho-(1D-myo-inositol-3,5-bisphosphate) + H2O = 1,2-dioctanoyl-sn-glycero-3-phospho-(1D-myo-inositol-5-phosphate) + phosphate. The catalysed reaction is 1,2-dioctanoyl-sn-glycero-3-phospho-(1-D-myo-inositol-3-phosphate) + H2O = 1,2-dioctanoyl-sn-glycero-3-phospho-(1D-myo-inositol) + phosphate. Allosterically activated by phosphatidylserine and/or phosphatidylinositol 4-phosphate (PtdIns(4)P), and phosphatidylinositol 5-phosphate (PtdIns(5)P). Interaction with MTMR9 increases catalytic activity towards phosphatidylinositol 3,5-bisphosphate. Lipid phosphatase that specifically dephosphorylates the D-3 position of phosphatidylinositol 3-phosphate and phosphatidylinositol 3,5-bisphosphate, generating phosphatidylinositol and phosphatidylinositol 5-phosphate. Binds with high affinity to phosphatidylinositol 3,5-bisphosphate (PtdIns(3,5)P2) but also to phosphatidylinositol 3-phosphate (PtdIns(3)P), phosphatidylinositol 4-phosphate (PtdIns(4)P), and phosphatidylinositol 5-phosphate (PtdIns(5)P), phosphatidic acid and phosphatidylserine. Negatively regulates ER-Golgi protein transport. Probably in association with MTMR9, plays a role in the late stages of macropinocytosis by dephosphorylating phosphatidylinositol 3-phosphate in membrane ruffles. Acts as a negative regulator of KCNN4/KCa3.1 channel activity in CD4(+) T-cells possibly by decreasing intracellular levels of phosphatidylinositol 3-phosphate. Negatively regulates proliferation of reactivated CD4(+) T-cells. In complex with MTMR9, negatively regulates DNA damage-induced apoptosis. The formation of the MTMR6-MTMR9 complex stabilizes both MTMR6 and MTMR9 protein levels. This is Phosphatidylinositol-3,5-bisphosphate 3-phosphatase MTMR6 from Rattus norvegicus (Rat).